A 1018-amino-acid chain; its full sequence is MLPSIVISIVLASFVSAESSITEAPTTTAEDNPYTIYPSVAKTASINGFADRIYDQLPECAKPCMFQNTGVTPCPYWDTGCLCIMPTFAGAIGSCIAEKCKGQDVVSATSLGTSICSVAGVWDPYWMVPANVQSSLSAAATAVASSSEQPVETSSEPAGSSQSVESSQPAETSSSEPAETSSSEPAETSSETSSEQPASSEPAETSSEESSTITSAPSTPEDNPYTIYPSVAKTASINGFADRIYDQLPECAKPCMFQNTGVTPCPYWDTGCLCIMPTFAGAIGSCIAEKCKGQDVVSATSLGTSICSVAGVWDPYWMVPANVQSSLSAAATAVPSSSEQSVETSSESAESSQSVESSQPAETSSEQPSETSSETSSQQLSSITSAPDSSATSSSSTTSTFIRTASINGFADKLYDQLPECAKPCMFQNTGITPCPYWDAGCLCVMPQFAGAIGSCVADSCKGQDIVSVTSLGTSVCSVAGVNAPYWMLPASVKSSLSVAATAVPTSDSASETASQEPSETSSEQPSETASQQPAETSSEESSTITSAPSTPEDNPYTIYPSVAKTASINGFADRIYDQLPECAKPCMFQNTGVTPCPYWDTGCLCIMPTFAGAIGSCIAEKCKGQDVVSATSLGSSICSVAGVWDPYWMLPANVQSSLNAAATAVATSDSASEVASASESASQVPQETSAASSQSANNSVASAAPSNSSVSAAPSSNSSGVPAAPSNNSSGASVVPSQSANNSSASAAPSNNSSSAISESVAPSSYGNSTIAQPSTSTKSDAASITGPITTDKVITNESGIVFTSTVIITHVSEYCDQTSAAAVQSSACEEQSSAKSEQASASSEQVKVITSVVWCESSIQSIESVKTSAEAAHKTEVIASCASELSSLSSAKSEAMKTVSSLVEVQKSAVAKQTSLAAVQSSAASVQLSAAHAQKSSEAVEVAQTAVAEASKAGDEISTEIVNITKTVSSGKETGVSQATVAANTHSVAIANMANTKFASTMSLLVASFVFVGLFI.

The signal sequence occupies residues 1–17 (MLPSIVISIVLASFVSA). Positions 32–143 (NPYTIYPSVA…SSLSAAATAV (112 aa)) constitute a CFEM 1 domain. 4 cysteine pairs are disulfide-bonded: Cys60-Cys100, Cys64-Cys95, Cys74-Cys81, and Cys83-Cys116. A heme-binding site is contributed by Asp78. The tract at residues 147–227 (SEQPVETSSE…STPEDNPYTI (81 aa)) is disordered. Residues 148 to 164 (EQPVETSSEPAGSSQSV) are compositionally biased toward polar residues. Residues 165 to 221 (ESSQPAETSSSEPAETSSSEPAETSSETSSEQPASSEPAETSSEESSTITSAPSTPE) are compositionally biased toward low complexity. CFEM domains follow at residues 223-334 (NPYT…ATAV) and 393-504 (SSSS…ATAV). 4 disulfides stabilise this stretch: Cys251/Cys291, Cys255/Cys286, Cys265/Cys272, and Cys274/Cys307. Asp269 is a heme binding site. Positions 338-396 (SEQSVETSSESAESSQSVESSQPAETSSEQPSETSSETSSQQLSSITSAPDSSATSSSS) are disordered. 4 disulfides stabilise this stretch: Cys421–Cys461, Cys425–Cys456, Cys435–Cys442, and Cys444–Cys477. Residue Asp439 coordinates heme. Positions 507–557 (SDSASETASQEPSETSSEQPSETASQQPAETSSEESSTITSAPSTPEDNPY) are disordered. Residues 509–553 (SASETASQEPSETSSEQPSETASQQPAETSSEESSTITSAPSTPE) are compositionally biased toward low complexity. The CFEM 4 domain maps to 555-666 (NPYTIYPSVA…SSLNAAATAV (112 aa)). Cystine bridges form between Cys583–Cys623, Cys587–Cys618, Cys597–Cys604, and Cys606–Cys639. Asp601 is a binding site for heme. The disordered stretch occupies residues 677–785 (SASESASQVP…STSTKSDAAS (109 aa)). A compositionally biased stretch (low complexity) spans 690–766 (SAASSQSANN…AISESVAPSS (77 aa)). Residues Asn698, Asn708, Asn718, Asn729, Asn743, Asn753, Asn769, Asn798, and Asn965 are each glycosylated (N-linked (GlcNAc...) asparagine). The segment covering 767-785 (YGNSTIAQPSTSTKSDAAS) has biased composition (polar residues). Ser989 carries GPI-anchor amidated serine lipidation. Residues 990 to 1018 (VAIANMANTKFASTMSLLVASFVFVGLFI) constitute a propeptide, removed in mature form.

The protein belongs to the RBT5 family. Post-translationally, the GPI-anchor is attached to the protein in the endoplasmic reticulum and serves to target the protein to the cell surface. There, the glucosamine-inositol phospholipid moiety is cleaved off and the GPI-modified mannoprotein is covalently attached via its lipidless GPI glycan remnant to the 1,6-beta-glucan of the outer cell wall layer.

It is found in the secreted. It localises to the cell wall. Its subcellular location is the membrane. Functionally, heme-binding protein involved in heme-iron utilization. The ability to acquire iron from host tissues is a major virulence factor of pathogenic microorganisms. Required for biofilm formation. This chain is Cell wall protein 1 (CSA1), found in Candida albicans (strain SC5314 / ATCC MYA-2876) (Yeast).